The following is a 247-amino-acid chain: Carboxy-S-adenosyl-L-methionine synthase (247 aa).

Residues tyrosine 40, 65–67 (GAS), 90–91 (DN), 122–123 (DI), asparagine 137, and arginine 204 each bind S-adenosyl-L-methionine.

Belongs to the class I-like SAM-binding methyltransferase superfamily. Cx-SAM synthase family. Homodimer.

The catalysed reaction is prephenate + S-adenosyl-L-methionine = carboxy-S-adenosyl-L-methionine + 3-phenylpyruvate + H2O. Its function is as follows. Catalyzes the conversion of S-adenosyl-L-methionine (SAM) to carboxy-S-adenosyl-L-methionine (Cx-SAM). This Ectopseudomonas mendocina (strain ymp) (Pseudomonas mendocina) protein is Carboxy-S-adenosyl-L-methionine synthase.